We begin with the raw amino-acid sequence, 118 residues long: Small ribosomal subunit protein uS13 (118 aa).

A disordered region spans residues 94–118; sequence GLPVRGQRTRTNARTRKGPRKAIKK.

It belongs to the universal ribosomal protein uS13 family. As to quaternary structure, part of the 30S ribosomal subunit. Forms a loose heterodimer with protein S19. Forms two bridges to the 50S subunit in the 70S ribosome.

In terms of biological role, located at the top of the head of the 30S subunit, it contacts several helices of the 16S rRNA. In the 70S ribosome it contacts the 23S rRNA (bridge B1a) and protein L5 of the 50S subunit (bridge B1b), connecting the 2 subunits; these bridges are implicated in subunit movement. Contacts the tRNAs in the A and P-sites. This is Small ribosomal subunit protein uS13 from Thiobacillus denitrificans (strain ATCC 25259 / T1).